Reading from the N-terminus, the 292-residue chain is Selenate reductase subunit B (292 aa).

A signal peptide (tat-type signal) is located at residues 1–43; it reads MGSKETKNTSRRDFLIKGAGAAALGAGAFAISQVPLLEKLASA. 4Fe-4S ferredoxin-type domains lie at 84–113, 129–160, and 161–190; these read WIMVIDLKKCVGCSSCTVACVSENVLPPGV, VTKKFTPRPCMQCEHPPCTKVCPIGATYKSED, and GIVAIDYDKCIGCRYCITACPYGARTFDWG. Residues Cys-93, Cys-96, Cys-99, Cys-103, Cys-138, Cys-141, Cys-146, Cys-150, Cys-170, Cys-173, Cys-176, Cys-180, Cys-230, Cys-233, Cys-245, and Cys-249 each coordinate [4Fe-4S] cluster.

As to quaternary structure, the complex is composed of three subunits: SrdA, SrdB and SrdC. The cofactor is [4Fe-4S] cluster. In terms of processing, predicted to be exported by the Tat system. The position of the signal peptide cleavage has not been experimentally proven.

It is found in the secreted. The enzyme catalyses selenite + a quinone + H2O = selenate + a quinol. Its function is as follows. Component of the respiratory selenate reductase complex, which catalyzes the reduction of selenate to selenite. This subunit probably transfers electrons from SrdC to SrdA. In Mesobacillus selenatarsenatis (strain DSM 18680 / JCM 14380 / FERM P-15431 / SF-1), this protein is Selenate reductase subunit B.